The following is a 65-amino-acid chain: Small ribosomal subunit protein eS27 (65 aa).

Zn(2+) contacts are provided by Cys20, Cys23, Cys39, and Cys42. A C4-type zinc finger spans residues 20 to 42 (CIDCGNEQIVFSHPATPVRCLVC).

Belongs to the eukaryotic ribosomal protein eS27 family. In terms of assembly, part of the 30S ribosomal subunit. Zn(2+) serves as cofactor.

This Thermococcus kodakarensis (strain ATCC BAA-918 / JCM 12380 / KOD1) (Pyrococcus kodakaraensis (strain KOD1)) protein is Small ribosomal subunit protein eS27.